The chain runs to 315 residues: Ribosomal RNA small subunit methyltransferase H (315 aa).

Residues 37–39 (GGH), Asp-57, Phe-83, Asp-105, and Gln-112 contribute to the S-adenosyl-L-methionine site.

The protein belongs to the methyltransferase superfamily. RsmH family.

It is found in the cytoplasm. The enzyme catalyses cytidine(1402) in 16S rRNA + S-adenosyl-L-methionine = N(4)-methylcytidine(1402) in 16S rRNA + S-adenosyl-L-homocysteine + H(+). Specifically methylates the N4 position of cytidine in position 1402 (C1402) of 16S rRNA. The sequence is that of Ribosomal RNA small subunit methyltransferase H from Pseudomonas putida (strain GB-1).